The primary structure comprises 220 residues: Putative NAD(P)H nitroreductase (220 aa).

155–160 (GASALG) contacts NAD(+).

This sequence belongs to the nitroreductase family. FMN is required as a cofactor.

In Haemophilus influenzae (strain ATCC 51907 / DSM 11121 / KW20 / Rd), this protein is Putative NAD(P)H nitroreductase.